A 124-amino-acid chain; its full sequence is Small ribosomal subunit protein eS6 (124 aa).

The protein belongs to the eukaryotic ribosomal protein eS6 family.

The sequence is that of Small ribosomal subunit protein eS6 from Methanococcus maripaludis (strain DSM 14266 / JCM 13030 / NBRC 101832 / S2 / LL).